The chain runs to 304 residues: Recombination-associated protein RdgC (304 aa).

It belongs to the RdgC family.

The protein localises to the cytoplasm. The protein resides in the nucleoid. Its function is as follows. May be involved in recombination. This Shewanella sp. (strain MR-4) protein is Recombination-associated protein RdgC.